The sequence spans 453 residues: Pre-mRNA-splicing factor prp46 (453 aa).

Residues E62–G71 show a composition bias toward low complexity. The tract at residues E62–D129 is disordered. 7 WD repeats span residues G142–T181, G184–H223, G226–V265, G268–T309, H311–E350, G351–S389, and D400–S439. The tract at residues D432–Y453 is disordered.

The protein belongs to the WD repeat PRL1/PRL2 family. As to quaternary structure, associated with the spliceosome.

It localises to the cytoplasm. Its subcellular location is the nucleus. In terms of biological role, involved in pre-mRNA splicing and required for cell cycle progression at G2/M. In Aspergillus fumigatus (strain ATCC MYA-4609 / CBS 101355 / FGSC A1100 / Af293) (Neosartorya fumigata), this protein is Pre-mRNA-splicing factor prp46 (prp46).